Reading from the N-terminus, the 346-residue chain is Probable dual-specificity RNA methyltransferase RlmN (346 aa).

The active-site Proton acceptor is E92. The region spanning 98–332 is the Radical SAM core domain; that stretch reads TDQRLTVCVS…VSLRASRGLD (235 aa). C105 and C337 are oxidised to a cystine. [4Fe-4S] cluster is bound by residues C112, C116, and C119. S-adenosyl-L-methionine contacts are provided by residues 159-160, S189, 218-220, and N294; these read GE and SLH. Catalysis depends on C337, which acts as the S-methylcysteine intermediate.

It belongs to the radical SAM superfamily. RlmN family. [4Fe-4S] cluster serves as cofactor.

The protein resides in the cytoplasm. It catalyses the reaction adenosine(2503) in 23S rRNA + 2 reduced [2Fe-2S]-[ferredoxin] + 2 S-adenosyl-L-methionine = 2-methyladenosine(2503) in 23S rRNA + 5'-deoxyadenosine + L-methionine + 2 oxidized [2Fe-2S]-[ferredoxin] + S-adenosyl-L-homocysteine. It carries out the reaction adenosine(37) in tRNA + 2 reduced [2Fe-2S]-[ferredoxin] + 2 S-adenosyl-L-methionine = 2-methyladenosine(37) in tRNA + 5'-deoxyadenosine + L-methionine + 2 oxidized [2Fe-2S]-[ferredoxin] + S-adenosyl-L-homocysteine. Functionally, specifically methylates position 2 of adenine 2503 in 23S rRNA and position 2 of adenine 37 in tRNAs. The chain is Probable dual-specificity RNA methyltransferase RlmN from Synechococcus sp. (strain CC9311).